The chain runs to 180 residues: Chromosome-anchoring protein RacA (180 aa).

Positions 5 to 25 (TPFIAKKLGVSPKAVVRIAQQ) form a DNA-binding region, H-T-H motif. Residues 67–151 (KASSNEVEEL…LEAALTKEEP (85 aa)) adopt a coiled-coil conformation.

It belongs to the RacA family.

It localises to the cytoplasm. Required for the formation of axial filaments and for anchoring the origin regions at the cell poles in sporulating cells, thus ensuring proper chromosome segregation in the prespore. Binds in a dispersed manner throughout the chromosome but preferentially to sites clustered in the origin portion of the chromosome, causing condensation of the chromosome and its remodeling into an elongated, anchored structure. The polypeptide is Chromosome-anchoring protein RacA (Bacillus cereus (strain B4264)).